Consider the following 406-residue polypeptide: Succinylornithine transaminase (406 aa).

K252 is subject to N6-(pyridoxal phosphate)lysine.

This sequence belongs to the class-III pyridoxal-phosphate-dependent aminotransferase family. AstC subfamily. The cofactor is pyridoxal 5'-phosphate.

It catalyses the reaction N(2)-succinyl-L-ornithine + 2-oxoglutarate = N-succinyl-L-glutamate 5-semialdehyde + L-glutamate. Its pathway is amino-acid degradation; L-arginine degradation via AST pathway; L-glutamate and succinate from L-arginine: step 3/5. Functionally, catalyzes the transamination of N(2)-succinylornithine and alpha-ketoglutarate into N(2)-succinylglutamate semialdehyde and glutamate. Can also act as an acetylornithine aminotransferase. The polypeptide is Succinylornithine transaminase (Escherichia coli O139:H28 (strain E24377A / ETEC)).